The primary structure comprises 545 residues: MNIQTENTKTVGADFDAVVIGAGFGGLYAVHKLRNEQGLNVRGYDSASDVGGTWWWNRYPGALSDTESYVYRYSFDKELLRKGRWKTRYLTQPEILEYMNEVADHLDLRRSYKFDTKVDGAHYNEKTGLWNVITDSGETVTAKYLVTGLGLLSATNVPKFKGIDDFKGRILHTGAWPEGVDLSNKRVGIIGTGSTGVQVITATAPIAKHLTVFQRSAQYVVPIGNTPQDDATIAEQKANYDNIWNQVKNSVVAFGFEESAEPAETASPEERERVFEAAWQRGGGFYFMFGTFCDIATSQVANDAAADFIKGKIKQIVKDPKVAEKLTPKDLYAKRPLCGNNYYEVYNRDNVTLADVKADPIAEFTPNGIRLESGEEHELDIVIFATGFDAVDGNYVKMDLRGRGGVTMRDTWKEGPLGYLGMMEVDFPNFFMILGPNGPFTNLPPSIETQVEWIADTICAMEEEGVQSVEPTVEARDAWVGTCREIADMTLFPKAESWIFGANIPGKKNAVMFYMAGIGNYRNAISAVKEEGYTSLIRDRTAEKV.

Residues F24, D45, W54, D65, Y71, and V118 each coordinate FAD.

It belongs to the FAD-binding monooxygenase family. Requires FAD as cofactor.

Catalyzes a Baeyer-Villiger oxidation reaction, i.e. the insertion of an oxygen atom into a carbon-carbon bond adjacent to a carbonyl, which converts ketones to esters or lactones using NADPH as an electron donor. Besides cycloalkanones, can use cyclic alpha,beta-unsaturated ketones as substrates, leading to conjugated ene-lactones. Can also act on methylated cycloalkanones and methylated cycloalkenones with high enantioselectivity in some cases. The polypeptide is Baeyer-Villiger monooxygenase (Pseudooceanicola batsensis (strain ATCC BAA-863 / DSM 15984 / KCTC 12145 / HTCC2597) (Oceanicola batsensis)).